The chain runs to 816 residues: Transducer protein Htr18 (816 aa).

Transmembrane regions (helical) follow at residues 21–41 (VVIV…TQAV) and 282–302 (NIVV…LVIG). The region spanning 303–356 (RDALTALTDMSDRAEAIAAGDIDTAIEETTRIDEVGDLRRSFRDIQEYLQTVAG) is the HAMP 1 domain. The disordered stretch occupies residues 399–425 (DAQETAEQSRKEAEQSREEAEALAAAL). Residues 405–418 (EQSRKEAEQSREEA) show a composition bias toward basic and acidic residues. The 54-residue stretch at 423–476 (AALESQAQDIRETVEHAADGDLTQRLETDTDHESMAAIATALNSLLEELEGTIH) folds into the HAMP 2 domain. Residues 495–731 (SAEEVKRASG…EVVTMVDEVG (237 aa)) enclose the Methyl-accepting transducer domain. The disordered stretch occupies residues 790-816 (GGAENTTGAFVRSASTDHSRDATHHDT). Residues 793–803 (ENTTGAFVRSA) show a composition bias toward polar residues. The segment covering 804-816 (STDHSRDATHHDT) has biased composition (basic and acidic residues).

Belongs to the methyl-accepting chemotaxis (MCP) protein family. In terms of processing, methylated by CheR.

The protein resides in the cell membrane. In terms of biological role, potentially involved in chemo- or phototactic signal transduction. The chain is Transducer protein Htr18 (htr18) from Halobacterium salinarum (strain ATCC 29341 / DSM 671 / R1).